We begin with the raw amino-acid sequence, 132 residues long: CLAVATA3/ESR (CLE)-related protein 2-B (132 aa).

An N-terminal signal peptide occupies residues 1–26; sequence MASRMGMVAILSLFVCALVASTSVNA. The interval 68-132 is disordered; that stretch reads NRASKQLDRE…IGPPPFLDRY (65 aa). 2 positions are modified to hydroxyproline: P82 and P85. Residue P85 is glycosylated (O-linked (Ara...) hydroxyproline).

This sequence belongs to the CLV3/ESR signal peptide family. In terms of processing, the O-glycosylation (arabinosylation) of the hydroxyproline Pro-85 enhances binding affinity of the ESR2Bp peptide for its receptor. In terms of tissue distribution, seed endosperm.

It localises to the secreted. It is found in the extracellular space. Its function is as follows. Extracellular signal peptide that regulates cell fate. In Zea mays (Maize), this protein is CLAVATA3/ESR (CLE)-related protein 2-B.